Here is a 345-residue protein sequence, read N- to C-terminus: 3-dehydroquinate synthase (345 aa).

Belongs to the archaeal-type DHQ synthase family.

It catalyses the reaction 2-amino-2,3,7-trideoxy-D-lyxo-hept-6-ulosonate + NAD(+) + H2O = 3-dehydroquinate + NH4(+) + NADH + H(+). In terms of biological role, catalyzes the oxidative deamination and cyclization of 2-amino-3,7-dideoxy-D-threo-hept-6-ulosonic acid (ADH) to yield 3-dehydroquinate (DHQ), which is fed into the canonical shikimic pathway of aromatic amino acid biosynthesis. This Methanocorpusculum labreanum (strain ATCC 43576 / DSM 4855 / Z) protein is 3-dehydroquinate synthase.